The chain runs to 938 residues: Isoleucine--tRNA ligase (938 aa).

The 'HIGH' region signature appears at Pro-58–His-68. The residue at position 183 (Lys-183) is an N6-acetyllysine. Glu-561 provides a ligand contact to L-isoleucyl-5'-AMP. A 'KMSKS' region motif is present at residues Lys-602–Ser-606. ATP is bound at residue Lys-605. Cys-901, Cys-904, Cys-921, and Cys-924 together coordinate Zn(2+).

The protein belongs to the class-I aminoacyl-tRNA synthetase family. IleS type 1 subfamily. In terms of assembly, monomer. Zn(2+) is required as a cofactor.

The protein resides in the cytoplasm. It catalyses the reaction tRNA(Ile) + L-isoleucine + ATP = L-isoleucyl-tRNA(Ile) + AMP + diphosphate. Functionally, catalyzes the attachment of isoleucine to tRNA(Ile). As IleRS can inadvertently accommodate and process structurally similar amino acids such as valine, to avoid such errors it has two additional distinct tRNA(Ile)-dependent editing activities. One activity is designated as 'pretransfer' editing and involves the hydrolysis of activated Val-AMP. The other activity is designated 'posttransfer' editing and involves deacylation of mischarged Val-tRNA(Ile). The chain is Isoleucine--tRNA ligase from Escherichia coli O127:H6 (strain E2348/69 / EPEC).